A 459-amino-acid chain; its full sequence is Sperm microtubule associated protein 2-like (459 aa).

A disordered region spans residues 1–138; it reads MEEGDFSGSS…QEDGKDDLFP (138 aa). Positions 21–30 are enriched in low complexity; that stretch reads TTTTTETRTT. Over residues 47-63 the composition is skewed to acidic residues; sequence NGDEAEAVGEEGQEEDY. The segment covering 64-73 has biased composition (basic and acidic residues); it reads EGSKTHKSHE. Residues 77–87 show a composition bias toward polar residues; it reads SFRSHNSSDPP. Basic and acidic residues-rich tracts occupy residues 91–112 and 127–136; these read KASD…KTSD and ERQEDGKDDL. 8 THEG repeats span residues 172–190, 212–231, 258–277, 291–310, 327–346, 367–386, 403–422, and 440–459; these read KKCF…PKKQ, AALK…PRLV, PALV…PNKF, TTRY…AKGT, STLS…PRIK, AALL…SKRV, AATH…PHTR, and SALK…PIVR.

This is Sperm microtubule associated protein 2-like from Mus musculus (Mouse).